The sequence spans 309 residues: Oxygen-dependent coproporphyrinogen-III oxidase (309 aa).

Ser-94 provides a ligand contact to substrate. Residues His-98 and His-108 each contribute to the a divalent metal cation site. His-108 acts as the Proton donor in catalysis. Residue 110–112 participates in substrate binding; sequence NVR. A divalent metal cation-binding residues include His-147 and His-177. The tract at residues 242–277 is important for dimerization; sequence YVEFNLVWDRGTLFGLQTGGRTESILMSLPPLVRWE. 260 to 262 provides a ligand contact to substrate; the sequence is GGR.

It belongs to the aerobic coproporphyrinogen-III oxidase family. In terms of assembly, homodimer. Requires a divalent metal cation as cofactor.

It localises to the cytoplasm. The enzyme catalyses coproporphyrinogen III + O2 + 2 H(+) = protoporphyrinogen IX + 2 CO2 + 2 H2O. It functions in the pathway porphyrin-containing compound metabolism; protoporphyrin-IX biosynthesis; protoporphyrinogen-IX from coproporphyrinogen-III (O2 route): step 1/1. Functionally, involved in the heme biosynthesis. Catalyzes the aerobic oxidative decarboxylation of propionate groups of rings A and B of coproporphyrinogen-III to yield the vinyl groups in protoporphyrinogen-IX. This is Oxygen-dependent coproporphyrinogen-III oxidase from Yersinia pestis bv. Antiqua (strain Antiqua).